The following is an 872-amino-acid chain: G-type lectin S-receptor-like serine/threonine-protein kinase At5g24080 (872 aa).

A signal peptide spans 1 to 25 (MSSFHFYFPSVGLFSFFCFFLVSLA). The Extracellular portion of the chain corresponds to 26-472 (TEPHIGLGSK…SRKSHGLRQK (447 aa)). The Bulb-type lectin domain occupies 30–149 (IGLGSKLKAS…EVTAGPTIWQ (120 aa)). Residues Asn49, Asn117, Asn208, Asn219, Asn261, and Asn294 are each glycosylated (N-linked (GlcNAc...) asparagine). Positions 306–344 (VSNPCDIAGICGNGVCNLDRTKKNADCLCLPGSVKLPDQ) constitute an EGF-like; atypical domain. 2 cysteine pairs are disulfide-bonded: Cys310–Cys321 and Cys316–Cys332. N-linked (GlcNAc...) asparagine glycosylation is found at Asn353, Asn367, and Asn390. The region spanning 360-447 (CESNINRNGS…PGSTLFVKTR (88 aa)) is the PAN domain. Intrachain disulfides connect Cys400-Cys424 and Cys404-Cys410. N-linked (GlcNAc...) asparagine glycans are attached at residues Asn449 and Asn459. Residues 473–493 (VLVIPIVVGMLVLVALLGMLL) form a helical membrane-spanning segment. Residues 494–872 (YYNLDRKRTL…TCSYSSMSPR (379 aa)) lie on the Cytoplasmic side of the membrane. Thr521 is modified (phosphothreonine). Residues 530–810 (NNFSQLLGSG…LEGTSDEINL (281 aa)) form the Protein kinase domain. ATP-binding positions include 536–544 (LGSGGFGTV) and Lys558. Phosphotyrosine is present on Tyr603. A caM-binding region spans residues 619–637 (EQTANLLDWRTRFEIAVAT). Residue Asp656 is the Proton acceptor of the active site. Phosphothreonine occurs at positions 690 and 695.

The protein belongs to the protein kinase superfamily. Ser/Thr protein kinase family.

It localises to the cell membrane. It carries out the reaction L-seryl-[protein] + ATP = O-phospho-L-seryl-[protein] + ADP + H(+). The catalysed reaction is L-threonyl-[protein] + ATP = O-phospho-L-threonyl-[protein] + ADP + H(+). The chain is G-type lectin S-receptor-like serine/threonine-protein kinase At5g24080 from Arabidopsis thaliana (Mouse-ear cress).